The chain runs to 390 residues: Lipid-A-disaccharide synthase (390 aa).

This sequence belongs to the LpxB family.

The enzyme catalyses a lipid X + a UDP-2-N,3-O-bis[(3R)-3-hydroxyacyl]-alpha-D-glucosamine = a lipid A disaccharide + UDP + H(+). Its pathway is bacterial outer membrane biogenesis; LPS lipid A biosynthesis. Its function is as follows. Condensation of UDP-2,3-diacylglucosamine and 2,3-diacylglucosamine-1-phosphate to form lipid A disaccharide, a precursor of lipid A, a phosphorylated glycolipid that anchors the lipopolysaccharide to the outer membrane of the cell. In Neisseria gonorrhoeae (strain ATCC 700825 / FA 1090), this protein is Lipid-A-disaccharide synthase.